A 154-amino-acid polypeptide reads, in one-letter code: Endoribonuclease YbeY (154 aa).

The Zn(2+) site is built by His116, His120, and His126.

Belongs to the endoribonuclease YbeY family. Requires Zn(2+) as cofactor.

It localises to the cytoplasm. Functionally, single strand-specific metallo-endoribonuclease involved in late-stage 70S ribosome quality control and in maturation of the 3' terminus of the 16S rRNA. The sequence is that of Endoribonuclease YbeY from Buchnera aphidicola subsp. Baizongia pistaciae (strain Bp).